A 119-amino-acid chain; its full sequence is U-scoloptoxin(01)-Er1a (119 aa).

The N-terminal stretch at 1 to 22 (MEIHSNIILLLLIALFAIFVKM) is a signal peptide. Residues 39-97 (NFACSGKKPGFYADEGFDCQVYHMCSPEGQLTTYLCGPGTIFNQKKLVCDLPTNYNCAD) enclose the Chitin-binding type-2 domain. Cysteine 74 and cysteine 87 are oxidised to a cystine.

The protein belongs to the scoloptoxin-01 family. Post-translationally, contains 3 disulfide bonds. In terms of tissue distribution, expressed by the venom gland.

The protein localises to the secreted. This chain is U-scoloptoxin(01)-Er1a, found in Ethmostigmus rubripes (Giant centipede).